Consider the following 89-residue polypeptide: Small ribosomal subunit protein uS15 (89 aa).

This sequence belongs to the universal ribosomal protein uS15 family. In terms of assembly, part of the 30S ribosomal subunit. Forms a bridge to the 50S subunit in the 70S ribosome, contacting the 23S rRNA.

In terms of biological role, one of the primary rRNA binding proteins, it binds directly to 16S rRNA where it helps nucleate assembly of the platform of the 30S subunit by binding and bridging several RNA helices of the 16S rRNA. Its function is as follows. Forms an intersubunit bridge (bridge B4) with the 23S rRNA of the 50S subunit in the ribosome. The protein is Small ribosomal subunit protein uS15 of Lactobacillus gasseri (strain ATCC 33323 / DSM 20243 / BCRC 14619 / CIP 102991 / JCM 1131 / KCTC 3163 / NCIMB 11718 / NCTC 13722 / AM63).